The sequence spans 380 residues: Ubiquitin-like protein 7 (380 aa).

Residues T18–D98 enclose the Ubiquitin-like domain. The segment at A200–I313 is disordered. The segment covering D206–P221 has biased composition (low complexity). The residue at position 230 (S230) is a Phosphoserine. Low complexity-rich tracts occupy residues T240 to P253 and S270 to T293. Positions Q294–I313 are enriched in polar residues. The region spanning S333 to G377 is the UBA domain.

In terms of assembly, binds ubiquitin. Interacts with MAVS; this interaction enhances TRIM21-dependent 'Lys-27'-linked polyubiquitination of MAVS. In terms of processing, deubiquitinated by OTUD4 which stabilizes UBL7 expression. Ubiquitous. Highly expressed in heart, skeletal muscle, testis, thyroid and adrenal gland.

Functionally, interferon-stimulated protein that positively regulates RNA virus-triggered innate immune signaling. Mechanistically, promotes 'Lys-27'-linked polyubiquitination of MAVS through TRIM21 leading to enhanced the IFN signaling pathway. This chain is Ubiquitin-like protein 7 (UBL7), found in Homo sapiens (Human).